The following is a 418-amino-acid chain: MRLNSSAPGTPGTPAADPFQRAQAGLEEALLAPGFGNASGNASERVLAAPSSELDVNTDIYSKVLVTAVYLALFVVGTVGNTVTAFTLARKKSLQSLQSTVHYHLGSLALSDLLTLLLAMPVELYNFIWVHHPWAFGDAGCRGYYFLRDACTYATALNVASLSVERYLAICHPFKAKTLMSRSRTKKFISAIWLASALLAVPMLFTMGEQNRSADGQHAGGLVCTPTIHTATVKVVIQVNTFMSFIFPMVVISVLNTIIANKLTVMVRQAAEQGQVCTVGGEHSTFSMAIEPGRVQALRHGVRVLRAVVIAFVVCWLPYHVRRLMFCYISDEQWTPFLYDFYHYFYMVTNALFYVSSTINPILYNLVSANFRHIFLATLACLCPVWRRRRKRPAFSRKADSVSSNHTLSSNATRETLY.

Topologically, residues 1–67 (MRLNSSAPGT…TDIYSKVLVT (67 aa)) are extracellular. N-linked (GlcNAc...) asparagine glycosylation is found at Asn4, Asn37, and Asn41. Residues 68–88 (AVYLALFVVGTVGNTVTAFTL) form a helical membrane-spanning segment. The Cytoplasmic segment spans residues 89–102 (ARKKSLQSLQSTVH). The chain crosses the membrane as a helical span at residues 103-122 (YHLGSLALSDLLTLLLAMPV). Residues 123 to 142 (ELYNFIWVHHPWAFGDAGCR) are Extracellular-facing. Cys141 and Cys224 form a disulfide bridge. The helical transmembrane segment at 143–164 (GYYFLRDACTYATALNVASLSV) threads the bilayer. Residues 165–184 (ERYLAICHPFKAKTLMSRSR) are Cytoplasmic-facing. Residues 185–205 (TKKFISAIWLASALLAVPMLF) form a helical membrane-spanning segment. Residues 206–234 (TMGEQNRSADGQHAGGLVCTPTIHTATVK) lie on the Extracellular side of the membrane. Residues 235–259 (VVIQVNTFMSFIFPMVVISVLNTII) traverse the membrane as a helical segment. Residues 260–303 (ANKLTVMVRQAAEQGQVCTVGGEHSTFSMAIEPGRVQALRHGVR) are Cytoplasmic-facing. The helical transmembrane segment at 304–325 (VLRAVVIAFVVCWLPYHVRRLM) threads the bilayer. The interval 321 to 344 (VRRLMFCYISDEQWTPFLYDFYHY) is neurotensin binding. The Extracellular segment spans residues 326–343 (FCYISDEQWTPFLYDFYH). A helical transmembrane segment spans residues 344–364 (YFYMVTNALFYVSSTINPILY). Residues 365-418 (NLVSANFRHIFLATLACLCPVWRRRRKRPAFSRKADSVSSNHTLSSNATRETLY) lie on the Cytoplasmic side of the membrane. 2 S-palmitoyl cysteine lipidation sites follow: Cys381 and Cys383.

It belongs to the G-protein coupled receptor 1 family. Neurotensin receptor subfamily. NTSR1 sub-subfamily. As to quaternary structure, interacts (palmitoylated form) with GNA11. Post-translationally, N-glycosylated. In terms of processing, palmitoylated; this is required for normal localization at membrane rafts and normal GNA11-mediated activation of down-stream signaling cascades. The palmitoylation level increases in response to neurotensin treatment. As to expression, expressed in prostate (at protein level). Detected in colon and peripheral blood mononuclear cells. Detected at very low levels in brain.

The protein resides in the cell membrane. It is found in the membrane raft. In terms of biological role, G-protein coupled receptor for the tridecapeptide neurotensin (NTS). Signaling is effected via G proteins that activate a phosphatidylinositol-calcium second messenger system. Signaling leads to the activation of downstream MAP kinases and protects cells against apoptosis. This Homo sapiens (Human) protein is Neurotensin receptor type 1 (NTSR1).